The primary structure comprises 398 residues: Lysophospholipid transporter LplT (398 aa).

A run of 11 helical transmembrane segments spans residues 19 to 39 (VIAA…ATLA), 53 to 73 (ILQM…GQVA), 91 to 111 (LGAA…LVGI), 139 to 159 (LMEA…GVLA), 164 to 184 (IAAL…NLFI), 227 to 247 (LFWG…PVAL), 257 to 277 (YLNA…AKLV), 281 to 301 (TVAR…IFSL), 304 to 324 (ALLP…FFVV), 350 to 370 (GENS…LVGI), and 372 to 392 (VVAI…ALWI).

It belongs to the major facilitator superfamily. LplT (TC 2.A.1.42) family.

The protein localises to the cell inner membrane. Its function is as follows. Catalyzes the facilitated diffusion of 2-acyl-glycero-3-phosphoethanolamine (2-acyl-GPE) into the cell. This is Lysophospholipid transporter LplT from Citrobacter koseri (strain ATCC BAA-895 / CDC 4225-83 / SGSC4696).